The following is a 185-amino-acid chain: Sarcoplasmic calcium-binding proteins I, III, and IV (185 aa).

EF-hand domains follow at residues 5–41 (FQKQ…YKEV), 57–92 (SLED…TIAT), 102–137 (WCQN…FQLQ), and 138–173 (CADV…TSPA). Ca(2+)-binding residues include Asp-19, Asn-21, Asp-23, Ser-25, Asp-30, Asp-70, Asn-72, Asp-74, Glu-81, Asp-115, Ser-117, Asp-119, and Glu-126.

Its function is as follows. Like parvalbumins, SCPs seem to be more abundant in fast contracting muscles, but no functional relationship can be established from this distribution. In Branchiostoma lanceolatum (Common lancelet), this protein is Sarcoplasmic calcium-binding proteins I, III, and IV.